The sequence spans 430 residues: Mucorpepsin (430 aa).

Residues 1-22 form the signal peptide; it reads MLFSQITSAILLTAASLSLTTA. A propeptide spans 23–69 (activation peptide); sequence RPVSKQSESKDKLLALPLTSVSRKFSQTKFGQQQLAEKLAGLKPFSE. The 333-residue stretch at 89–421 folds into the Peptidase A1 domain; sequence YAIPVSIGTP…DFGNNRIGFA (333 aa). Asp-107 is a catalytic residue. A disulfide bond links Cys-120 and Cys-126. 2 N-linked (GlcNAc...) asparagine glycosylation sites follow: Asn-148 and Asn-257. Asp-306 is a catalytic residue. A disulfide bond links Cys-341 and Cys-385.

Belongs to the peptidase A1 family.

The enzyme catalyses Hydrolysis of proteins, favoring hydrophobic residues at P1 and P1'. Clots milk. Does not accept Lys at P1, and hence does not activate trypsinogen.. Functionally, this enzyme, capable of clotting milk is frequently used for cheese production. The chain is Mucorpepsin from Rhizomucor miehei.